We begin with the raw amino-acid sequence, 277 residues long: Bifunctional protein FolD (277 aa).

NADP(+) contacts are provided by residues 164-166 (GRS), serine 189, and valine 230.

The protein belongs to the tetrahydrofolate dehydrogenase/cyclohydrolase family. In terms of assembly, homodimer.

It carries out the reaction (6R)-5,10-methylene-5,6,7,8-tetrahydrofolate + NADP(+) = (6R)-5,10-methenyltetrahydrofolate + NADPH. It catalyses the reaction (6R)-5,10-methenyltetrahydrofolate + H2O = (6R)-10-formyltetrahydrofolate + H(+). It participates in one-carbon metabolism; tetrahydrofolate interconversion. In terms of biological role, catalyzes the oxidation of 5,10-methylenetetrahydrofolate to 5,10-methenyltetrahydrofolate and then the hydrolysis of 5,10-methenyltetrahydrofolate to 10-formyltetrahydrofolate. This Exiguobacterium sibiricum (strain DSM 17290 / CCUG 55495 / CIP 109462 / JCM 13490 / 255-15) protein is Bifunctional protein FolD.